The chain runs to 269 residues: Shikimate dehydrogenase (NADP(+)) (269 aa).

Shikimate contacts are provided by residues 17–19 and Thr64; that span reads SKS. The active-site Proton acceptor is Lys68. Glu80 provides a ligand contact to NADP(+). Shikimate-binding residues include Asn89 and Asp105. NADP(+)-binding positions include 130 to 134, 154 to 159, and Met213; these read GAGGA and NRTHAK. A shikimate-binding site is contributed by Tyr215. NADP(+) is bound at residue Gly237.

The protein belongs to the shikimate dehydrogenase family. As to quaternary structure, homodimer.

It catalyses the reaction shikimate + NADP(+) = 3-dehydroshikimate + NADPH + H(+). It functions in the pathway metabolic intermediate biosynthesis; chorismate biosynthesis; chorismate from D-erythrose 4-phosphate and phosphoenolpyruvate: step 4/7. Involved in the biosynthesis of the chorismate, which leads to the biosynthesis of aromatic amino acids. Catalyzes the reversible NADPH linked reduction of 3-dehydroshikimate (DHSA) to yield shikimate (SA). The protein is Shikimate dehydrogenase (NADP(+)) of Neisseria flavescens.